We begin with the raw amino-acid sequence, 828 residues long: DNA gyrase subunit A (828 aa).

The region spanning 32–497 (LPDVRDGLKP…EVLSLEDEDL (466 aa)) is the Topo IIA-type catalytic domain. Residue Tyr120 is the O-(5'-phospho-DNA)-tyrosine intermediate of the active site. A GyrA-box motif is present at residues 524–530 (QKRGGRG).

Belongs to the type II topoisomerase GyrA/ParC subunit family. In terms of assembly, heterotetramer, composed of two GyrA and two GyrB chains. In the heterotetramer, GyrA contains the active site tyrosine that forms a transient covalent intermediate with DNA, while GyrB binds cofactors and catalyzes ATP hydrolysis.

It localises to the cytoplasm. It catalyses the reaction ATP-dependent breakage, passage and rejoining of double-stranded DNA.. In terms of biological role, a type II topoisomerase that negatively supercoils closed circular double-stranded (ds) DNA in an ATP-dependent manner to modulate DNA topology and maintain chromosomes in an underwound state. Negative supercoiling favors strand separation, and DNA replication, transcription, recombination and repair, all of which involve strand separation. Also able to catalyze the interconversion of other topological isomers of dsDNA rings, including catenanes and knotted rings. Type II topoisomerases break and join 2 DNA strands simultaneously in an ATP-dependent manner. The polypeptide is DNA gyrase subunit A (Streptococcus pyogenes serotype M18 (strain MGAS8232)).